Reading from the N-terminus, the 213-residue chain is GTP cyclohydrolase 1 (213 aa).

Positions Met1–Glu27 are disordered. Zn(2+)-binding residues include Cys100, His103, and Cys172.

The protein belongs to the GTP cyclohydrolase I family. Homomer.

The catalysed reaction is GTP + H2O = 7,8-dihydroneopterin 3'-triphosphate + formate + H(+). It functions in the pathway cofactor biosynthesis; 7,8-dihydroneopterin triphosphate biosynthesis; 7,8-dihydroneopterin triphosphate from GTP: step 1/1. The chain is GTP cyclohydrolase 1 from Beijerinckia indica subsp. indica (strain ATCC 9039 / DSM 1715 / NCIMB 8712).